The chain runs to 94 residues: Large ribosomal subunit protein bL25 (94 aa).

This sequence belongs to the bacterial ribosomal protein bL25 family. As to quaternary structure, part of the 50S ribosomal subunit; part of the 5S rRNA/L5/L18/L25 subcomplex. Contacts the 5S rRNA. Binds to the 5S rRNA independently of L5 and L18.

In terms of biological role, this is one of the proteins that binds to the 5S RNA in the ribosome where it forms part of the central protuberance. This is Large ribosomal subunit protein bL25 from Pectobacterium atrosepticum (strain SCRI 1043 / ATCC BAA-672) (Erwinia carotovora subsp. atroseptica).